The primary structure comprises 311 residues: Methionyl-tRNA formyltransferase (311 aa).

Residue 110 to 113 participates in (6S)-5,6,7,8-tetrahydrofolate binding; sequence SLLP.

This sequence belongs to the Fmt family.

The enzyme catalyses L-methionyl-tRNA(fMet) + (6R)-10-formyltetrahydrofolate = N-formyl-L-methionyl-tRNA(fMet) + (6S)-5,6,7,8-tetrahydrofolate + H(+). Attaches a formyl group to the free amino group of methionyl-tRNA(fMet). The formyl group appears to play a dual role in the initiator identity of N-formylmethionyl-tRNA by promoting its recognition by IF2 and preventing the misappropriation of this tRNA by the elongation apparatus. The protein is Methionyl-tRNA formyltransferase of Streptococcus pyogenes serotype M49 (strain NZ131).